Reading from the N-terminus, the 289-residue chain is Carbonyl reductase [NADPH] 1 (289 aa).

Position 2 is an N-acetylserine (serine 2). Residue serine 2 is modified to Phosphoserine. NADP(+)-binding positions include 10-34 (VTGA…GDVV), 63-64 (DI), and asparagine 90. Glutathione-binding positions include 95–97 (FQL) and glutamine 106. Serine 140 provides a ligand contact to substrate. 193 to 194 (TY) is a glutathione binding site. The active-site Proton acceptor is the tyrosine 194. Residues 194 to 198 (YGVTK) and 231 to 233 (VRT) each bind NADP(+). N6-1-carboxyethyl lysine is present on lysine 239.

It belongs to the short-chain dehydrogenases/reductases (SDR) family. As to quaternary structure, monomer. As to expression, expressed in kidney (at protein level).

It localises to the cytoplasm. The catalysed reaction is a secondary alcohol + NADP(+) = a ketone + NADPH + H(+). The enzyme catalyses prostaglandin E1 + NADP(+) = 15-oxoprostaglandin E1 + NADPH + H(+). It catalyses the reaction prostaglandin F2alpha + NADP(+) = prostaglandin E2 + NADPH + H(+). It carries out the reaction prostaglandin D2 + NADP(+) = 15-oxoprostaglandin D2 + NADPH + H(+). The catalysed reaction is prostaglandin E2 + NADP(+) = 15-oxoprostaglandin E2 + NADPH + H(+). The enzyme catalyses prostaglandin F2alpha + NADP(+) = 15-oxoprostaglandin F2alpha + NADPH + H(+). It catalyses the reaction menadione + NADPH + H(+) = menadiol + NADP(+). It carries out the reaction daunorubicin + NADPH + H(+) = 13-dihydrodaunorubicin + NADP(+). The catalysed reaction is S-nitrosoglutathione + NADPH + H(+) = S-(hydroxysulfenamide)glutathione + NADP(+). The enzyme catalyses a primary alcohol + NADP(+) = an aldehyde + NADPH + H(+). It catalyses the reaction cortisol + NADPH + H(+) = 20beta-dihydrocortisol + NADP(+). It carries out the reaction corticosterone + NADPH + H(+) = 20beta-dihydrocorticosterone + NADP(+). NADPH-dependent reductase with broad substrate specificity. Catalyzes the reduction of a wide variety of carbonyl compounds including quinones, prostaglandins, menadione, plus various xenobiotics. Catalyzes the reduction of the antitumor anthracyclines doxorubicin and daunorubicin to the cardiotoxic compounds doxorubicinol and daunorubicinol. Can convert prostaglandin E2 to prostaglandin F2-alpha. Can bind glutathione, which explains its higher affinity for glutathione-conjugated substrates. Catalyzes the reduction of S-nitrosoglutathione. In addition, participates in the glucocorticoid metabolism by catalyzing the NADPH-dependent cortisol/corticosterone into 20beta-dihydrocortisol (20b-DHF) or 20beta-corticosterone (20b-DHB), which are weak agonists of NR3C1 and NR3C2 in adipose tissue. This is Carbonyl reductase [NADPH] 1 from Sus scrofa (Pig).